The primary structure comprises 96 residues: Co-chaperonin GroES (96 aa).

The protein belongs to the GroES chaperonin family. As to quaternary structure, heptamer of 7 subunits arranged in a ring. Interacts with the chaperonin GroEL.

It localises to the cytoplasm. Together with the chaperonin GroEL, plays an essential role in assisting protein folding. The GroEL-GroES system forms a nano-cage that allows encapsulation of the non-native substrate proteins and provides a physical environment optimized to promote and accelerate protein folding. GroES binds to the apical surface of the GroEL ring, thereby capping the opening of the GroEL channel. This is Co-chaperonin GroES from Legionella micdadei (Tatlockia micdadei).